We begin with the raw amino-acid sequence, 860 residues long: DNA gyrase subunit A (860 aa).

One can recognise a Topo IIA-type catalytic domain in the interval 34–503 (LPDARDGLKP…EDGELIDTDL (470 aa)). Tyr122 serves as the catalytic O-(5'-phospho-DNA)-tyrosine intermediate. Residues 530–536 (QNRATRG) carry the GyrA-box motif.

Belongs to the type II topoisomerase GyrA/ParC subunit family. In terms of assembly, heterotetramer, composed of two GyrA and two GyrB chains. In the heterotetramer, GyrA contains the active site tyrosine that forms a transient covalent intermediate with DNA, while GyrB binds cofactors and catalyzes ATP hydrolysis.

The protein localises to the cytoplasm. It catalyses the reaction ATP-dependent breakage, passage and rejoining of double-stranded DNA.. Its function is as follows. A type II topoisomerase that negatively supercoils closed circular double-stranded (ds) DNA in an ATP-dependent manner to modulate DNA topology and maintain chromosomes in an underwound state. Negative supercoiling favors strand separation, and DNA replication, transcription, recombination and repair, all of which involve strand separation. Also able to catalyze the interconversion of other topological isomers of dsDNA rings, including catenanes and knotted rings. Type II topoisomerases break and join 2 DNA strands simultaneously in an ATP-dependent manner. This chain is DNA gyrase subunit A, found in Synechocystis sp. (strain ATCC 27184 / PCC 6803 / Kazusa).